The sequence spans 245 residues: UDP-N-acetyl-D-mannosaminuronic acid transferase (245 aa).

This sequence belongs to the glycosyltransferase 26 family.

The enzyme catalyses UDP-N-acetyl-alpha-D-mannosaminouronate + N-acetyl-alpha-D-glucosaminyl-di-trans,octa-cis-undecaprenyl diphosphate = beta-D-ManNAcA-(1-&gt;4)-alpha-D-GlcNAc-di-trans,octa-cis-undecaprenyl diphosphate + UDP + H(+). It functions in the pathway bacterial outer membrane biogenesis; enterobacterial common antigen biosynthesis. Functionally, catalyzes the synthesis of Und-PP-GlcNAc-ManNAcA (Lipid II), the second lipid-linked intermediate involved in enterobacterial common antigen (ECA) synthesis. The chain is UDP-N-acetyl-D-mannosaminuronic acid transferase from Proteus mirabilis (strain HI4320).